The sequence spans 516 residues: Protein phosphatase 1H (516 aa).

2 disordered regions span residues 102-122 and 181-202; these read ADPS…PSGD and PPTC…SGSQ. The region spanning 106–506 is the PPM-type phosphatase domain; sequence SVSYTPSRRR…DDISVFIIPL (401 aa). Over residues 190-202 the composition is skewed to polar residues; that stretch reads PNPQLHASASGSQ.

Belongs to the PP2C family.

The protein resides in the nucleus. The protein localises to the cytoplasm. It catalyses the reaction O-phospho-L-seryl-[protein] + H2O = L-seryl-[protein] + phosphate. It carries out the reaction O-phospho-L-threonyl-[protein] + H2O = L-threonyl-[protein] + phosphate. The polypeptide is Protein phosphatase 1H (ppm1h) (Danio rerio (Zebrafish)).